Reading from the N-terminus, the 443-residue chain is Glutamate--tRNA ligase 1 (443 aa).

Positions 7–17 (PSPTGYLHVGN) match the 'HIGH' region motif. The short motif at 236–240 (KISKR) is the 'KMSKS' region element. Lysine 239 is an ATP binding site.

The protein belongs to the class-I aminoacyl-tRNA synthetase family. Glutamate--tRNA ligase type 1 subfamily. In terms of assembly, monomer.

Its subcellular location is the cytoplasm. The catalysed reaction is tRNA(Glu) + L-glutamate + ATP = L-glutamyl-tRNA(Glu) + AMP + diphosphate. Its function is as follows. Catalyzes the attachment of glutamate to tRNA(Glu) in a two-step reaction: glutamate is first activated by ATP to form Glu-AMP and then transferred to the acceptor end of tRNA(Glu). The polypeptide is Glutamate--tRNA ligase 1 (Ehrlichia chaffeensis (strain ATCC CRL-10679 / Arkansas)).